A 382-amino-acid chain; its full sequence is Galactokinase (382 aa).

Glu-34–Asp-37 is a binding site for substrate. An ATP-binding site is contributed by Gly-124 to Ser-130. Mg(2+) contacts are provided by Ser-130 and Glu-162. The active-site Proton acceptor is the Asp-174. Tyr-223 provides a ligand contact to substrate.

It belongs to the GHMP kinase family. GalK subfamily.

It localises to the cytoplasm. The enzyme catalyses alpha-D-galactose + ATP = alpha-D-galactose 1-phosphate + ADP + H(+). Its pathway is carbohydrate metabolism; galactose metabolism. In terms of biological role, catalyzes the transfer of the gamma-phosphate of ATP to D-galactose to form alpha-D-galactose-1-phosphate (Gal-1-P). This Escherichia coli O7:K1 (strain IAI39 / ExPEC) protein is Galactokinase.